A 391-amino-acid polypeptide reads, in one-letter code: Processive diacylglycerol beta-glucosyltransferase (391 aa).

Belongs to the glycosyltransferase 28 family. UgtP subfamily.

Its subcellular location is the cell membrane. It catalyses the reaction a 1,2-diacyl-3-O-(beta-D-glucopyranosyl)-sn-glycerol + UDP-alpha-D-glucose = a 1,2-diacyl-3-O-(beta-D-Glc-(1-&gt;6)-beta-D-Glc)-sn-glycerol + UDP + H(+). It carries out the reaction a 1,2-diacyl-sn-glycerol + UDP-alpha-D-glucose = a 1,2-diacyl-3-O-(beta-D-glucopyranosyl)-sn-glycerol + UDP + H(+). The protein operates within glycolipid metabolism; diglucosyl-diacylglycerol biosynthesis. In terms of biological role, processive glucosyltransferase involved in the biosynthesis of both the bilayer- and non-bilayer-forming membrane glucolipids. Is able to successively transfer two glucosyl residues to diacylglycerol (DAG), thereby catalyzing the formation of beta-monoglucosyl-DAG (3-O-(beta-D-glucopyranosyl)-1,2-diacyl-sn-glycerol) and beta-diglucosyl-DAG (3-O-(beta-D-glucopyranosyl-beta-(1-&gt;6)-D-glucopyranosyl)-1,2-diacyl-sn-glycerol). Beta-diglucosyl-DAG is the predominant glycolipid found in Bacillales and is also used as a membrane anchor for lipoteichoic acid (LTA). The polypeptide is Processive diacylglycerol beta-glucosyltransferase (Staphylococcus epidermidis (strain ATCC 35984 / DSM 28319 / BCRC 17069 / CCUG 31568 / BM 3577 / RP62A)).